We begin with the raw amino-acid sequence, 391 residues long: Transaldolase (391 aa).

K134 serves as the catalytic Schiff-base intermediate with substrate. EF-hand domains lie at 329–364 and 365–387; these read TLTH…FDAL and DANH…VLHL. 9 residues coordinate Ca(2+): D342, D344, D346, E353, D365, N367, D369, K371, and D376.

This sequence belongs to the transaldolase family. Type 1 subfamily.

It localises to the cytoplasm. It catalyses the reaction D-sedoheptulose 7-phosphate + D-glyceraldehyde 3-phosphate = D-erythrose 4-phosphate + beta-D-fructose 6-phosphate. Its pathway is carbohydrate degradation; pentose phosphate pathway; D-glyceraldehyde 3-phosphate and beta-D-fructose 6-phosphate from D-ribose 5-phosphate and D-xylulose 5-phosphate (non-oxidative stage): step 2/3. Transaldolase is important for the balance of metabolites in the pentose-phosphate pathway. This Thermosynechococcus vestitus (strain NIES-2133 / IAM M-273 / BP-1) protein is Transaldolase.